Here is an 887-residue protein sequence, read N- to C-terminus: Pyruvate dehydrogenase E1 component (887 aa).

Positions 231, 261, and 263 each coordinate Mg(2+). Position 716 is an N6-acetyllysine (Lys-716).

Homodimer. Part of the PDH complex, consisting of multiple copies of pyruvate dehydrogenase (E1), dihydrolipoamide acetyltransferase (E2) and lipoamide dehydrogenase (E3). It depends on Mg(2+) as a cofactor. Thiamine diphosphate is required as a cofactor.

It carries out the reaction N(6)-[(R)-lipoyl]-L-lysyl-[protein] + pyruvate + H(+) = N(6)-[(R)-S(8)-acetyldihydrolipoyl]-L-lysyl-[protein] + CO2. In terms of biological role, component of the pyruvate dehydrogenase (PDH) complex, that catalyzes the overall conversion of pyruvate to acetyl-CoA and CO(2). The polypeptide is Pyruvate dehydrogenase E1 component (aceE) (Escherichia coli O157:H7).